Reading from the N-terminus, the 96-residue chain is Myoglobin (96 aa).

Residues 1-96 (GLSDGEWQLV…AKTKELGFLG (96 aa)) enclose the Globin domain. Residue Ser-3 is modified to Phosphoserine. His-61 is a nitrite binding site. His-61 lines the O2 pocket. Residue Thr-64 is modified to Phosphothreonine.

Belongs to the globin family. Monomeric.

It localises to the cytoplasm. Its subcellular location is the sarcoplasm. It catalyses the reaction Fe(III)-heme b-[protein] + nitric oxide + H2O = Fe(II)-heme b-[protein] + nitrite + 2 H(+). The catalysed reaction is H2O2 + AH2 = A + 2 H2O. Its function is as follows. Monomeric heme protein which primary function is to store oxygen and facilitate its diffusion within muscle tissues. Reversibly binds oxygen through a pentacoordinated heme iron and enables its timely and efficient release as needed during periods of heightened demand. Depending on the oxidative conditions of tissues and cells, and in addition to its ability to bind oxygen, it also has a nitrite reductase activity whereby it regulates the production of bioactive nitric oxide. Under stress conditions, like hypoxia and anoxia, it also protects cells against reactive oxygen species thanks to its pseudoperoxidase activity. The polypeptide is Myoglobin (MB) (Ailuropoda melanoleuca (Giant panda)).